The sequence spans 507 residues: ATP synthase subunit alpha, chloroplastic (507 aa).

170–177 (GDRQTGKT) contributes to the ATP binding site.

It belongs to the ATPase alpha/beta chains family. As to quaternary structure, F-type ATPases have 2 components, CF(1) - the catalytic core - and CF(0) - the membrane proton channel. CF(1) has five subunits: alpha(3), beta(3), gamma(1), delta(1), epsilon(1). CF(0) has four main subunits: a, b, b' and c.

It localises to the plastid. The protein resides in the chloroplast thylakoid membrane. The catalysed reaction is ATP + H2O + 4 H(+)(in) = ADP + phosphate + 5 H(+)(out). Its function is as follows. Produces ATP from ADP in the presence of a proton gradient across the membrane. The alpha chain is a regulatory subunit. The protein is ATP synthase subunit alpha, chloroplastic of Anthoceros angustus (Hornwort).